The primary structure comprises 479 residues: tRNA-2-methylthio-N(6)-dimethylallyladenosine synthase (479 aa).

Residues 6–122 enclose the MTTase N-terminal domain; the sequence is KTVYIKTVGC…IPDMLTKVTS (117 aa). Cys15, Cys51, Cys85, Cys172, Cys176, and Cys179 together coordinate [4Fe-4S] cluster. The Radical SAM core domain maps to 158-390; that stretch reads RPTPFQAYLR…LAVQDRISKE (233 aa). One can recognise a TRAM domain in the interval 393-464; the sequence is QKLIGDTVEV…SHTLIGRVKT (72 aa).

This sequence belongs to the methylthiotransferase family. MiaB subfamily. Monomer. It depends on [4Fe-4S] cluster as a cofactor.

The protein resides in the cytoplasm. The enzyme catalyses N(6)-dimethylallyladenosine(37) in tRNA + (sulfur carrier)-SH + AH2 + 2 S-adenosyl-L-methionine = 2-methylsulfanyl-N(6)-dimethylallyladenosine(37) in tRNA + (sulfur carrier)-H + 5'-deoxyadenosine + L-methionine + A + S-adenosyl-L-homocysteine + 2 H(+). Functionally, catalyzes the methylthiolation of N6-(dimethylallyl)adenosine (i(6)A), leading to the formation of 2-methylthio-N6-(dimethylallyl)adenosine (ms(2)i(6)A) at position 37 in tRNAs that read codons beginning with uridine. This Rhodopirellula baltica (strain DSM 10527 / NCIMB 13988 / SH1) protein is tRNA-2-methylthio-N(6)-dimethylallyladenosine synthase.